The following is a 506-amino-acid chain: Aldehyde dehydrogenase [NAD(P)+] 2 (506 aa).

Glutamate 268 acts as the Proton acceptor in catalysis. Cysteine 302 acts as the Nucleophile in catalysis.

This sequence belongs to the aldehyde dehydrogenase family.

The protein resides in the cytoplasm. It catalyses the reaction an aldehyde + NAD(+) + H2O = a carboxylate + NADH + 2 H(+). It carries out the reaction 3-aminopropanal + NAD(+) + H2O = beta-alanine + NADH + 2 H(+). Functionally, cytoplasmic aldehyde dehydrogenase involved in ethanol oxidation. Involved in pantothenic acid production through the conversion of 3-aminopropanal to beta-alanine, an intermediate in pantothenic acid (vitamin B5) and coenzyme A (CoA) biosynthesis. This is Aldehyde dehydrogenase [NAD(P)+] 2 (ALD3) from Saccharomyces cerevisiae (strain ATCC 204508 / S288c) (Baker's yeast).